Reading from the N-terminus, the 92-residue chain is Progonadoliberin-1 (92 aa).

Positions 1–23 are cleaved as a signal peptide; the sequence is MGLIPKLLAGLVLLTLCVENGSG. Residue Gln24 is modified to Pyrrolidone carboxylic acid. Gly33 is modified (glycine amide).

Belongs to the GnRH family. Post-translationally, the precursor is cleaved by ACE, which removes the Gly-Lys-Arg peptide at the C-terminus, leading to mature hormone. The mature form of Gonadoliberin-1 is also cleaved and degraded by ACE.

The protein localises to the secreted. In terms of biological role, stimulates the secretion of gonadotropins; it stimulates the secretion of both luteinizing and follicle-stimulating hormones. In Cavia porcellus (Guinea pig), this protein is Progonadoliberin-1 (GNRH1).